Here is a 242-residue protein sequence, read N- to C-terminus: Proteasome subunit beta type-4 (242 aa).

Positions E1 to H23 are excised as a propeptide. Catalysis depends on T24, which acts as the Nucleophile.

The protein belongs to the peptidase T1B family. In terms of assembly, the 26S proteasome consists of a 20S proteasome core and two 19S regulatory subunits. The 20S proteasome core is composed of 28 subunits that are arranged in four stacked rings, resulting in a barrel-shaped structure. The two end rings are each formed by seven alpha subunits, and the two central rings are each formed by seven beta subunits. The catalytic chamber with the active sites is on the inside of the barrel.

The protein localises to the cytoplasm. The protein resides in the nucleus. Non-catalytic component of the proteasome, a multicatalytic proteinase complex which is characterized by its ability to cleave peptides with Arg, Phe, Tyr, Leu, and Glu adjacent to the leaving group at neutral or slightly basic pH. The proteasome has an ATP-dependent proteolytic activity. In Xenopus laevis (African clawed frog), this protein is Proteasome subunit beta type-4 (psmb4).